The sequence spans 129 residues: Small ribosomal subunit protein uS11 (129 aa).

The protein belongs to the universal ribosomal protein uS11 family. In terms of assembly, part of the 30S ribosomal subunit. Interacts with proteins S7 and S18. Binds to IF-3.

Its function is as follows. Located on the platform of the 30S subunit, it bridges several disparate RNA helices of the 16S rRNA. Forms part of the Shine-Dalgarno cleft in the 70S ribosome. The sequence is that of Small ribosomal subunit protein uS11 from Salmonella newport (strain SL254).